Here is a 230-residue protein sequence, read N- to C-terminus: Translation initiation factor IF-3 (230 aa).

Disordered stretches follow at residues 1 to 21 and 184 to 230; these read MAIQ…RTNR and LQSQ…AAQR. The segment covering 193–208 has biased composition (low complexity); sequence AAAAAAPAAAPAAGAP. Over residues 209–220 the composition is skewed to pro residues; sequence APAPAPAAPAPA. Over residues 221–230 the composition is skewed to low complexity; it reads PTAADPAAQR.

Belongs to the IF-3 family. As to quaternary structure, monomer.

The protein localises to the cytoplasm. In terms of biological role, IF-3 binds to the 30S ribosomal subunit and shifts the equilibrium between 70S ribosomes and their 50S and 30S subunits in favor of the free subunits, thus enhancing the availability of 30S subunits on which protein synthesis initiation begins. This chain is Translation initiation factor IF-3, found in Anaeromyxobacter dehalogenans (strain 2CP-1 / ATCC BAA-258).